Here is a 183-residue protein sequence, read N- to C-terminus: Dual-action ribosomal maturation protein DarP (183 aa).

Positions 1–20 (MKQKYEDWLNDVPDNQEDDE) are disordered.

This sequence belongs to the DarP family.

Its subcellular location is the cytoplasm. Member of a network of 50S ribosomal subunit biogenesis factors which assembles along the 30S-50S interface, preventing incorrect 23S rRNA structures from forming. Promotes peptidyl transferase center (PTC) maturation. The polypeptide is Dual-action ribosomal maturation protein DarP (Pectobacterium carotovorum subsp. carotovorum (strain PC1)).